A 258-amino-acid polypeptide reads, in one-letter code: MISKNFFIESVNKTAIASAFSRAAHSYEQAASLQKEVGFRLLQMTGDIKKSWVLDAGCGTGYFSQFWRQKGNRVLSLDLSFEMLKKAKKKSAAQAYLLADIEHLPILDQKIDLCFSNMAIQWCDDLKVVLAEFHRVTRSGGVILFSTLAMGSLKELAQAWQKVDEEPHINRFLSFEEIQQICTPYHSELKMCLSKVCFPDLRSLIQSLRGVGATHLHRGRKVGLSSRARIQKLENAYPVKFGEYPLSYQLVYGIIYRD.

The protein belongs to the methyltransferase superfamily.

The catalysed reaction is malonyl-[ACP] + S-adenosyl-L-methionine = malonyl-[ACP] methyl ester + S-adenosyl-L-homocysteine. Its pathway is cofactor biosynthesis; biotin biosynthesis. Converts the free carboxyl group of a malonyl-thioester to its methyl ester by transfer of a methyl group from S-adenosyl-L-methionine (SAM). It allows to synthesize pimeloyl-ACP via the fatty acid synthetic pathway. This is Malonyl-[acyl-carrier protein] O-methyltransferase from Hamiltonella defensa subsp. Acyrthosiphon pisum (strain 5AT).